A 168-amino-acid polypeptide reads, in one-letter code: Large ribosomal subunit protein uL10 (168 aa).

It belongs to the universal ribosomal protein uL10 family. As to quaternary structure, part of the ribosomal stalk of the 50S ribosomal subunit. The N-terminus interacts with L11 and the large rRNA to form the base of the stalk. The C-terminus forms an elongated spine to which L12 dimers bind in a sequential fashion forming a multimeric L10(L12)X complex.

Forms part of the ribosomal stalk, playing a central role in the interaction of the ribosome with GTP-bound translation factors. The polypeptide is Large ribosomal subunit protein uL10 (Clostridioides difficile (strain 630) (Peptoclostridium difficile)).